Here is a 621-residue protein sequence, read N- to C-terminus: tRNA uridine 5-carboxymethylaminomethyl modification enzyme MnmG (621 aa).

An FAD-binding site is contributed by G9–G14. G270 to F284 is an NAD(+) binding site.

It belongs to the MnmG family. In terms of assembly, homodimer. Heterotetramer of two MnmE and two MnmG subunits. FAD is required as a cofactor.

It is found in the cytoplasm. In terms of biological role, NAD-binding protein involved in the addition of a carboxymethylaminomethyl (cmnm) group at the wobble position (U34) of certain tRNAs, forming tRNA-cmnm(5)s(2)U34. In Borreliella afzelii (strain PKo) (Borrelia afzelii), this protein is tRNA uridine 5-carboxymethylaminomethyl modification enzyme MnmG.